An 89-amino-acid polypeptide reads, in one-letter code: Large ribosomal subunit protein uL29c (89 aa).

It belongs to the universal ribosomal protein uL29 family.

Its subcellular location is the plastid. It is found in the chloroplast. In Trieres chinensis (Marine centric diatom), this protein is Large ribosomal subunit protein uL29c (rpl29).